The following is a 456-amino-acid chain: Bifunctional protein GlmU (456 aa).

Residues 1–229 are pyrophosphorylase; sequence MLNNAMSVVI…LSEVEGVNNR (229 aa). Residues 11–14, lysine 25, glutamine 76, 81–82, 103–105, glycine 140, glutamate 154, asparagine 169, and asparagine 227 each bind UDP-N-acetyl-alpha-D-glucosamine; these read LAAG, GT, and YGD. A Mg(2+)-binding site is contributed by aspartate 105. Asparagine 227 provides a ligand contact to Mg(2+). The segment at 230 to 250 is linker; the sequence is LQLSRLERVYQSEQAEKLLLA. Residues 251–456 are N-acetyltransferase; it reads GVMLRDPARF…EGWRRPVKKK (206 aa). Residues arginine 333 and lysine 351 each contribute to the UDP-N-acetyl-alpha-D-glucosamine site. Catalysis depends on histidine 363, which acts as the Proton acceptor. Positions 366 and 377 each coordinate UDP-N-acetyl-alpha-D-glucosamine. Acetyl-CoA-binding positions include alanine 380, 386-387, serine 405, alanine 423, and arginine 440; that span reads NY.

This sequence in the N-terminal section; belongs to the N-acetylglucosamine-1-phosphate uridyltransferase family. The protein in the C-terminal section; belongs to the transferase hexapeptide repeat family. In terms of assembly, homotrimer. Mg(2+) is required as a cofactor.

The protein resides in the cytoplasm. The catalysed reaction is alpha-D-glucosamine 1-phosphate + acetyl-CoA = N-acetyl-alpha-D-glucosamine 1-phosphate + CoA + H(+). It carries out the reaction N-acetyl-alpha-D-glucosamine 1-phosphate + UTP + H(+) = UDP-N-acetyl-alpha-D-glucosamine + diphosphate. The protein operates within nucleotide-sugar biosynthesis; UDP-N-acetyl-alpha-D-glucosamine biosynthesis; N-acetyl-alpha-D-glucosamine 1-phosphate from alpha-D-glucosamine 6-phosphate (route II): step 2/2. It functions in the pathway nucleotide-sugar biosynthesis; UDP-N-acetyl-alpha-D-glucosamine biosynthesis; UDP-N-acetyl-alpha-D-glucosamine from N-acetyl-alpha-D-glucosamine 1-phosphate: step 1/1. It participates in bacterial outer membrane biogenesis; LPS lipid A biosynthesis. Functionally, catalyzes the last two sequential reactions in the de novo biosynthetic pathway for UDP-N-acetylglucosamine (UDP-GlcNAc). The C-terminal domain catalyzes the transfer of acetyl group from acetyl coenzyme A to glucosamine-1-phosphate (GlcN-1-P) to produce N-acetylglucosamine-1-phosphate (GlcNAc-1-P), which is converted into UDP-GlcNAc by the transfer of uridine 5-monophosphate (from uridine 5-triphosphate), a reaction catalyzed by the N-terminal domain. This Shigella flexneri serotype 5b (strain 8401) protein is Bifunctional protein GlmU.